A 1272-amino-acid polypeptide reads, in one-letter code: Regulator of nonsense transcripts 2 (1272 aa).

Residues 1-114 show a composition bias toward basic and acidic residues; that stretch reads MPAERKKPAS…QEEQAKRQQE (114 aa). 4 disordered regions span residues 1-126, 370-389, 423-445, and 490-517; these read MPAE…EKEE, DHRE…HSKG, NMPD…DIFT, and CQNK…SPDD. Residues 54–134 are a coiled coil; it reads EDKKKRLEDD…EESIQLHQEA (81 aa). Residues 94–133 are sufficient for interaction with UPF1; it reads KKKHQEEERKKQEEQAKRQQEEEAAAQMKEKEESIQLHQE. Residues 168-431 enclose the MIF4G 1 domain; it reads LKKNTAFVKK…ENMPDLPQDK (264 aa). Composition is skewed to basic and acidic residues over residues 428 to 439 and 490 to 513; these read PQDKPTPEEHGP and CQNK…KEVS. A coiled-coil region spans residues 487 to 559; it reads EKSCQNKESN…EQEQEDEEAS (73 aa). MIF4G domains follow at residues 569–758 and 773–986; these read DAFL…CNPP and EYVR…LRPK. A sufficient for interaction with UPF3A and UPF3B region spans residues 711-928; that stretch reads GRFLFRSPES…IRLVCTILDT (218 aa). The tract at residues 757–1272 is sufficient for interaction with EIF4A1 and EIF1; sequence PPPAEKTVKK…LIFKTGGRRR (516 aa). Residues 839-859 are binds to UPF3B; sequence EDVGIHVVDGVLEDIRLGMEV. Residues 1018-1098 form a disordered region; sequence DSKDSMTEGE…DEENTEVMIK (81 aa). Over residues 1027 to 1076 the composition is skewed to acidic residues; it reads ENLEEDEEEEEGGAETEEQSGNESEVNEPEEEEGSDNDDDEGEEEEEENT. Residues 1084-1272 are sufficient for interaction with UPF1 C-terminus; sequence KENETDEENT…LIFKTGGRRR (189 aa). Thr-1088 is subject to Phosphothreonine. Interaction with UPF1 stretches follow at residues 1105–1129 and 1167–1207; these read VPCV…QQRS and DTMP…AEQE. The tract at residues 1105–1198 is necessary for interaction with UPF1; it reads VPCVEDEDFI…PMSSQLAANH (94 aa). The disordered stretch occupies residues 1220–1272; it reads NERQEQEDYQEMLQSLAQRPAPANTNRERRPRYQHPKGAPNADLIFKTGGRRR.

In terms of assembly, found in a post-splicing messenger ribonucleoprotein (mRNP) complex. Associates with the exon junction complex (EJC). Interacts with SMG1, EST1A, UPF1, UPF3A, UPF3B, EIF4A1 and EIF1. As to expression, ubiquitous.

It is found in the cytoplasm. It localises to the perinuclear region. Involved in nonsense-mediated decay (NMD) of mRNAs containing premature stop codons by associating with the nuclear exon junction complex (EJC). Recruited by UPF3B associated with the EJC core at the cytoplasmic side of the nuclear envelope and the subsequent formation of an UPF1-UPF2-UPF3 surveillance complex (including UPF1 bound to release factors at the stalled ribosome) is believed to activate NMD. In cooperation with UPF3B stimulates both ATPase and RNA helicase activities of UPF1. Binds spliced mRNA. The polypeptide is Regulator of nonsense transcripts 2 (Homo sapiens (Human)).